The sequence spans 109 residues: uncharacterized protein (109 aa).

Helical transmembrane passes span 16–36 (YIPLVVLLQMYIIYVEPYYGL), 54–74 (TVYFLVICHSIESAIAFLLCL), and 80–100 (FCSSMKWIVSTFIFGGPTLAM).

Its subcellular location is the membrane. This is an uncharacterized protein from Schizosaccharomyces pombe (strain 972 / ATCC 24843) (Fission yeast).